The following is a 162-amino-acid chain: MQSWYLLYCKRGQLQRAQEHLERQAVNCLAPMITLEKIVRGKRTAVSEPLFPNYLFVEFDPEVIHTTTINATRGVSHFVRFGASPAIVPSAVIHQLSVYKPKDIVDPSTPYPGDKVIITEGAFEGFQAIFTEPDGEARSMLLLNLINKEIKHSVKNTEFRKL.

Belongs to the RfaH family. As to quaternary structure, interacts with both the nontemplate DNA and the RNA polymerase (RNAP).

In terms of biological role, enhances distal genes transcription elongation in a specialized subset of operons that encode extracytoplasmic components. RfaH is recruited into a multi-component RNA polymerase complex by the ops element, which is a short conserved DNA sequence located downstream of the main promoter of these operons. Once bound, RfaH suppresses pausing and inhibits Rho-dependent and intrinsic termination at a subset of sites. Termination signals are bypassed, which allows complete synthesis of long RNA chains. Also negatively controls expression and surface presentation of AG43 and possibly another AG43-independent factor that mediates cell-cell interactions and biofilm formation,. The polypeptide is Transcription antitermination protein RfaH (Escherichia coli O6:K15:H31 (strain 536 / UPEC)).